We begin with the raw amino-acid sequence, 619 residues long: Translation initiation factor IF-2 (619 aa).

Composition is skewed to low complexity over residues 1-18 and 98-111; these read MTLN…TTPK and PPQL…LTKT. Disordered regions lie at residues 1–24 and 90–113; these read MTLN…KETD and SEPQ…KTKP. In terms of domain architecture, tr-type G spans 121–289; it reads KKSPIVTIMG…ILLVSEIQNL (169 aa). Residues 130-137 are G1; sequence GHVDHGKT. A GTP-binding site is contributed by 130–137; it reads GHVDHGKT. Positions 155–159 are G2; that stretch reads GITQH. Positions 176 to 179 are G3; sequence DTPG. GTP is bound by residues 176–180 and 230–233; these read DTPGH and NKID. Residues 230–233 form a G4 region; that stretch reads NKID. The tract at residues 266 to 268 is G5; that stretch reads SAL.

Belongs to the TRAFAC class translation factor GTPase superfamily. Classic translation factor GTPase family. IF-2 subfamily.

The protein resides in the cytoplasm. In terms of biological role, one of the essential components for the initiation of protein synthesis. Protects formylmethionyl-tRNA from spontaneous hydrolysis and promotes its binding to the 30S ribosomal subunits. Also involved in the hydrolysis of GTP during the formation of the 70S ribosomal complex. The sequence is that of Translation initiation factor IF-2 from Onion yellows phytoplasma (strain OY-M).